Consider the following 58-residue polypeptide: SPbeta prophage-derived uncharacterized protein YonT (58 aa).

Residues 6–26 (GIVVAFLISLTVLTINSLTIV) form a helical membrane-spanning segment. Positions 35 to 58 (GTSKKKKRIRKRLRPKRQRQRIRR) are disordered. The segment covering 36 to 58 (TSKKKKRIRKRLRPKRQRQRIRR) has biased composition (basic residues).

It localises to the cell membrane. The chain is SPbeta prophage-derived uncharacterized protein YonT (yonT) from Bacillus subtilis (strain 168).